A 485-amino-acid chain; its full sequence is N-succinylglutamate 5-semialdehyde dehydrogenase (485 aa).

220–225 is an NAD(+) binding site; that stretch reads GSANTG. Catalysis depends on residues Glu243 and Cys278.

This sequence belongs to the aldehyde dehydrogenase family. AstD subfamily.

It carries out the reaction N-succinyl-L-glutamate 5-semialdehyde + NAD(+) + H2O = N-succinyl-L-glutamate + NADH + 2 H(+). The protein operates within amino-acid degradation; L-arginine degradation via AST pathway; L-glutamate and succinate from L-arginine: step 4/5. Functionally, catalyzes the NAD-dependent reduction of succinylglutamate semialdehyde into succinylglutamate. This chain is N-succinylglutamate 5-semialdehyde dehydrogenase, found in Vibrio atlanticus (strain LGP32) (Vibrio splendidus (strain Mel32)).